The following is an 864-amino-acid chain: Probable M1 family aminopeptidase 2 (864 aa).

Substrate contacts are provided by residues Glu-149 and Gly-289–Asn-293. Residue His-325 coordinates Zn(2+). The Proton acceptor role is filled by Glu-326. Residues His-329 and Glu-348 each contribute to the Zn(2+) site.

This sequence belongs to the peptidase M1 family. The cofactor is Zn(2+).

The chain is Probable M1 family aminopeptidase 2 from Encephalitozoon cuniculi (strain GB-M1) (Microsporidian parasite).